The sequence spans 129 residues: Small ribosomal subunit protein uS11 (129 aa).

The protein belongs to the universal ribosomal protein uS11 family. In terms of assembly, part of the 30S ribosomal subunit. Interacts with proteins S7 and S18. Binds to IF-3.

Its function is as follows. Located on the platform of the 30S subunit, it bridges several disparate RNA helices of the 16S rRNA. Forms part of the Shine-Dalgarno cleft in the 70S ribosome. This is Small ribosomal subunit protein uS11 from Maridesulfovibrio salexigens (strain ATCC 14822 / DSM 2638 / NCIMB 8403 / VKM B-1763) (Desulfovibrio salexigens).